A 92-amino-acid polypeptide reads, in one-letter code: Putative regulatory protein Tpet_0986 (92 aa).

Belongs to the RemA family.

This chain is Putative regulatory protein Tpet_0986, found in Thermotoga petrophila (strain ATCC BAA-488 / DSM 13995 / JCM 10881 / RKU-1).